A 98-amino-acid chain; its full sequence is Small ribosomal subunit protein bS21B (98 aa).

A disordered region spans residues 61–98; the sequence is KLQREGLLPMKPKPVFGAGAGGERGGRGGPGAGPRGPR. Over residues 78–98 the composition is skewed to gly residues; that stretch reads AGAGGERGGRGGPGAGPRGPR.

The protein belongs to the bacterial ribosomal protein bS21 family.

This Bradyrhizobium diazoefficiens (strain JCM 10833 / BCRC 13528 / IAM 13628 / NBRC 14792 / USDA 110) protein is Small ribosomal subunit protein bS21B.